The primary structure comprises 358 residues: Protein Wnt-8b (358 aa).

The first 23 residues, 1 to 23 (MFMHLEVYYYAFILMAHMKTCCG), serve as a signal peptide directing secretion. Residues cysteine 55 and cysteine 66 are joined by a disulfide bond. Asparagine 104 carries N-linked (GlcNAc...) asparagine glycosylation. Cystine bridges form between cysteine 105–cysteine 113, cysteine 115–cysteine 133, cysteine 181–cysteine 195, cysteine 183–cysteine 190, cysteine 257–cysteine 295, cysteine 273–cysteine 288, cysteine 292–cysteine 334, cysteine 310–cysteine 325, cysteine 312–cysteine 322, and cysteine 317–cysteine 318. The O-palmitoleoyl serine moiety is linked to residue serine 187. Asparagine 260 and asparagine 279 each carry an N-linked (GlcNAc...) asparagine glycan. Asparagine 345 carries an N-linked (GlcNAc...) asparagine glycan.

It belongs to the Wnt family. Post-translationally, palmitoleoylation is required for efficient binding to frizzled receptors. Depalmitoleoylation leads to Wnt signaling pathway inhibition. In terms of processing, proteolytic processing by tiki1 and tiki2 promotes oxidation and formation of large disulfide-bond oligomers, leading to inactivation of wnt8b. Hindbrain r1, 2 and 5.

Its subcellular location is the secreted. The protein resides in the extracellular space. It is found in the extracellular matrix. In terms of biological role, ligand for fzd8a, a member of the G-protein coupled frizzled receptor family. May play a role in the establishment of polarity in the nervous system. Involved in canonical Wnt signaling pathway. During embryonic development, required for the acquisition of caudal diencephalic fate. Antagonizes eye specification. This chain is Protein Wnt-8b (wnt8b), found in Danio rerio (Zebrafish).